A 120-amino-acid polypeptide reads, in one-letter code: Flagellar protein FliT (120 aa).

Residues 1–50 are required for homodimerization; the sequence is MNDSSLSLKKWHALSALSNTMLSLAQSGKWDELIEQEVAYVSLVEKISIT. Positions 59–97 are fliD binding; the sequence is IQDQAMVMLNNVLQNEMTLKTLLQERMDELHGLMAQTGK.

It belongs to the FliT family. As to quaternary structure, homodimer. Interacts with FliD and FlhC.

The protein localises to the cytoplasm. It localises to the cytosol. Its function is as follows. Dual-function protein that regulates the transcription of class 2 flagellar operons and that also acts as an export chaperone for the filament-capping protein FliD. As a transcriptional regulator, acts as an anti-FlhDC factor; it directly binds FlhC, thus inhibiting the binding of the FlhC/FlhD complex to class 2 promoters, resulting in decreased expression of class 2 flagellar operons. As a chaperone, effects FliD transition to the membrane by preventing its premature polymerization, and by directing it to the export apparatus. The polypeptide is Flagellar protein FliT (Enterobacter sp. (strain 638)).